The chain runs to 94 residues: Integration host factor subunit beta (94 aa).

It belongs to the bacterial histone-like protein family. Heterodimer of an alpha and a beta chain.

Functionally, this protein is one of the two subunits of integration host factor, a specific DNA-binding protein that functions in genetic recombination as well as in transcriptional and translational control. The polypeptide is Integration host factor subunit beta (Brucella melitensis biotype 2 (strain ATCC 23457)).